The following is a 699-amino-acid chain: MTAIRGGSRRAPGLALALLGGVLLGACHGDENAQVNALPGFVSGSVRKTAYDGASDDLLTAGLGKTGLGSDTRPGFANPAQPSAAELRCLAIYSNYRALVDITPNGGYGRFWGPNVDLAGNDTLGEGKIAGTEYLAYSDDGSGRKNVTLLVQVPASFDPANPCIVTATASGSRGVYGAIAAAGEWGLKRGCAVAYNDKGGGNGAHEIGTGVVTLIDGTLATASSAGSSSLFTASESSSTLAAFNSAFPNRYAYKHAHSQQNPEQDWGRVTLQAVEFAYWALNEQFGPVVDGTRHGIRYRPGDITTIAASVSNGGGSALAAAEQDTRGWITAVVVGEPQINVRMTPGVTVEQGGAPVPSFGRPLADYATLANLLQPCAAAAVAATGAPYLSALPMGVTQSIRTQRCATLAAAGLVSGADTASQASDALAQLYAAGYLADSDLLQAPMWDSQAMPAIAVTYANAYTRSRVTDNLCNFSFATTNPVTGAVAAPAVSPMTNLFGAGNGVPPTNGINLVFNGASGGVDHRLATPDASFAGAFCLRQLWTANQLGIGTNVDAVRVAANLQHKPAIIVHGRSDALVPVNHASRAYVAQNSATEGRASQLSFYEVTNGQHFDAFLSVPGFDTRFVPVHYYDEQALNLMWNHLKSGAPLPPSQVIRTVPRGGVPGAAPALSTANLPPIVQSPGANAIAVNAGVIDVPL.

An N-terminal signal peptide occupies residues 1 to 33; sequence MTAIRGGSRRAPGLALALLGGVLLGACHGDENA. Serine 311 serves as the catalytic Charge relay system.

It belongs to the D-(-)-3-hydroxybutyrate oligomer hydrolase family.

The protein localises to the secreted. The catalysed reaction is (3R)-hydroxybutanoate dimer + H2O = 2 (R)-3-hydroxybutanoate + H(+). It participates in lipid metabolism; butanoate metabolism. In terms of biological role, participates in the degradation of poly-3-hydroxybutyrate (PHB). It works downstream of poly(3-hydroxybutyrate) depolymerase, hydrolyzing D(-)-3-hydroxybutyrate oligomers of various length (3HB-oligomers) into 3HB-monomers. The polypeptide is D-(-)-3-hydroxybutyrate oligomer hydrolase (Burkholderia mallei (strain SAVP1)).